The primary structure comprises 1407 residues: DNA-directed RNA polymerase subunit beta' (1407 aa).

Residues cysteine 70, cysteine 72, cysteine 85, and cysteine 88 each coordinate Zn(2+). Mg(2+) is bound by residues aspartate 460, aspartate 462, and aspartate 464. The Zn(2+) site is built by cysteine 814, cysteine 888, cysteine 895, and cysteine 898.

The protein belongs to the RNA polymerase beta' chain family. In terms of assembly, the RNAP catalytic core consists of 2 alpha, 1 beta, 1 beta' and 1 omega subunit. When a sigma factor is associated with the core the holoenzyme is formed, which can initiate transcription. It depends on Mg(2+) as a cofactor. The cofactor is Zn(2+).

The enzyme catalyses RNA(n) + a ribonucleoside 5'-triphosphate = RNA(n+1) + diphosphate. Its function is as follows. DNA-dependent RNA polymerase catalyzes the transcription of DNA into RNA using the four ribonucleoside triphosphates as substrates. In Pectobacterium atrosepticum (strain SCRI 1043 / ATCC BAA-672) (Erwinia carotovora subsp. atroseptica), this protein is DNA-directed RNA polymerase subunit beta'.